A 602-amino-acid chain; its full sequence is Cholinesterase (602 aa).

An N-terminal signal peptide occupies residues 1–28; it reads MQSKGTIISIQFLLRFLLLWVLIGKSHT. Asn85 carries an N-linked (GlcNAc...) asparagine glycan. Cys93 and Cys120 are disulfide-bonded. Residue Asn134 is glycosylated (N-linked (GlcNAc...) asparagine). Position 144–145 (144–145) interacts with substrate; the sequence is GG. Residue Ser226 is the Acyl-ester intermediate of the active site. At Ser226 the chain carries Phosphoserine. N-linked (GlcNAc...) asparagine glycosylation is found at Asn269 and Asn284. A disulfide bridge links Cys280 with Cys291. The active-site Charge relay system is Glu353. Residue Asn369 is glycosylated (N-linked (GlcNAc...) asparagine). A disulfide bond links Cys428 and Cys547. The Charge relay system role is filled by His466. 4 N-linked (GlcNAc...) asparagine glycosylation sites follow: Asn483, Asn509, Asn513, and Asn514.

Belongs to the type-B carboxylesterase/lipase family. Homotetramer; disulfide-linked. Dimer of dimers.

Its subcellular location is the secreted. The enzyme catalyses an acylcholine + H2O = a carboxylate + choline + H(+). Functionally, esterase with broad substrate specificity. Contributes to the inactivation of the neurotransmitter acetylcholine. Can degrade neurotoxic organophosphate esters. This Felis catus (Cat) protein is Cholinesterase (BCHE).